Reading from the N-terminus, the 328-residue chain is Formimidoylglutamase (328 aa).

6 residues coordinate Mn(2+): H133, D159, H161, D163, D253, and D255.

This sequence belongs to the arginase family. Requires Mn(2+) as cofactor.

It catalyses the reaction N-formimidoyl-L-glutamate + H2O = formamide + L-glutamate. Its pathway is amino-acid degradation; L-histidine degradation into L-glutamate; L-glutamate from N-formimidoyl-L-glutamate (hydrolase route): step 1/1. Catalyzes the conversion of N-formimidoyl-L-glutamate to L-glutamate and formamide. The sequence is that of Formimidoylglutamase from Streptococcus pyogenes serotype M6 (strain ATCC BAA-946 / MGAS10394).